The sequence spans 126 residues: uncharacterized protein (126 aa).

This is an uncharacterized protein from Escherichia coli (Bacteriophage T4).